The chain runs to 168 residues: Small ribosomal subunit protein uS5 (168 aa).

The S5 DRBM domain occupies 13-76; that stretch reads LQEKLIAVNR…EKARRNMVTV (64 aa).

The protein belongs to the universal ribosomal protein uS5 family. Part of the 30S ribosomal subunit. Contacts proteins S4 and S8.

Functionally, with S4 and S12 plays an important role in translational accuracy. Located at the back of the 30S subunit body where it stabilizes the conformation of the head with respect to the body. This is Small ribosomal subunit protein uS5 from Shewanella amazonensis (strain ATCC BAA-1098 / SB2B).